The following is a 215-amino-acid chain: Peptide methionine sulfoxide reductase MsrA (215 aa).

Residue cysteine 58 is part of the active site.

Belongs to the MsrA Met sulfoxide reductase family.

The enzyme catalyses L-methionyl-[protein] + [thioredoxin]-disulfide + H2O = L-methionyl-(S)-S-oxide-[protein] + [thioredoxin]-dithiol. The catalysed reaction is [thioredoxin]-disulfide + L-methionine + H2O = L-methionine (S)-S-oxide + [thioredoxin]-dithiol. Has an important function as a repair enzyme for proteins that have been inactivated by oxidation. Catalyzes the reversible oxidation-reduction of methionine sulfoxide in proteins to methionine. This chain is Peptide methionine sulfoxide reductase MsrA, found in Pseudomonas syringae pv. tomato (strain ATCC BAA-871 / DC3000).